Here is a 211-residue protein sequence, read N- to C-terminus: Transcription antitermination protein NusB (211 aa).

This sequence belongs to the NusB family.

Functionally, involved in transcription antitermination. Required for transcription of ribosomal RNA (rRNA) genes. Binds specifically to the boxA antiterminator sequence of the ribosomal RNA (rrn) operons. In Trichormus variabilis (strain ATCC 29413 / PCC 7937) (Anabaena variabilis), this protein is Transcription antitermination protein NusB.